We begin with the raw amino-acid sequence, 204 residues long: LexA repressor (204 aa).

Positions 28–48 (RAEIAQELGFKSPNAAEEHLK) form a DNA-binding region, H-T-H motif. Catalysis depends on for autocatalytic cleavage activity residues Ser125 and Lys162.

The protein belongs to the peptidase S24 family. In terms of assembly, homodimer.

It catalyses the reaction Hydrolysis of Ala-|-Gly bond in repressor LexA.. Its function is as follows. Represses a number of genes involved in the response to DNA damage (SOS response), including recA and lexA. In the presence of single-stranded DNA, RecA interacts with LexA causing an autocatalytic cleavage which disrupts the DNA-binding part of LexA, leading to derepression of the SOS regulon and eventually DNA repair. The polypeptide is LexA repressor (Ectopseudomonas mendocina (strain ymp) (Pseudomonas mendocina)).